Reading from the N-terminus, the 468-residue chain is Ribosomal lysine N-methyltransferase 4 (468 aa).

Residues 22–302 (EKIGLNDYRH…KGEQLWNTYG (281 aa)) enclose the SET domain. The disordered stretch occupies residues 188 to 225 (ISNENEKSAAETSIKEDKNGDAAKKNEGSANQDDEKLH). An S-adenosyl-L-methionine-binding site is contributed by Y301.

It belongs to the class V-like SAM-binding methyltransferase superfamily. Histone-lysine methyltransferase family. SETD6 subfamily.

The protein localises to the nucleus. Its function is as follows. S-adenosyl-L-methionine-dependent protein-lysine N-methyltransferase that monomethylates 60S ribosomal protein L42 (rpl42) at 'Lys-55'. This chain is Ribosomal lysine N-methyltransferase 4, found in Schizosaccharomyces pombe (strain 972 / ATCC 24843) (Fission yeast).